We begin with the raw amino-acid sequence, 223 residues long: Thylakoid lumenal 15.0 kDa protein 2, chloroplastic (223 aa).

It localises to the plastid. Its subcellular location is the chloroplast thylakoid lumen. The sequence is that of Thylakoid lumenal 15.0 kDa protein 2, chloroplastic from Arabidopsis thaliana (Mouse-ear cress).